The primary structure comprises 230 residues: Urease accessory protein UreG (230 aa).

Residues 1-31 form a disordered region; sequence MPPHFLSADSTGQPHRHADRPKRVRTPGEPL. Residues 14–25 show a composition bias toward basic residues; the sequence is PHRHADRPKRVR. GTP is bound at residue 37–44; sequence GPVGSGKT.

The protein belongs to the SIMIBI class G3E GTPase family. UreG subfamily. In terms of assembly, homodimer. UreD, UreF and UreG form a complex that acts as a GTP-hydrolysis-dependent molecular chaperone, activating the urease apoprotein by helping to assemble the nickel containing metallocenter of UreC. The UreE protein probably delivers the nickel.

The protein resides in the cytoplasm. Facilitates the functional incorporation of the urease nickel metallocenter. This process requires GTP hydrolysis, probably effectuated by UreG. This chain is Urease accessory protein UreG, found in Mycobacterium sp. (strain JLS).